The sequence spans 531 residues: Tryptophan 6-halogenase ThaL (531 aa).

Positions 13, 15, 16, 39, 42, 45, 47, and 50 each coordinate FAD. Residue lysine 79 is part of the active site. Residue proline 111 participates in L-tryptophan binding. The FAD site is built by methionine 198 and leucine 349. Chloride is bound by residues serine 360 and glycine 361. Isoleucine 362 provides a ligand contact to FAD. 4 residues coordinate L-tryptophan: tyrosine 454, tyrosine 455, glutamate 461, and phenylalanine 465.

The protein belongs to the flavin-dependent halogenase family. Bacterial tryptophan halogenase subfamily. In terms of assembly, homodimer. Monomer in solution.

The enzyme catalyses L-tryptophan + FADH2 + chloride + O2 = 6-chloro-L-tryptophan + FAD + 2 H2O. It carries out the reaction D-tryptophan + FADH2 + chloride + O2 = 6-chloro-D-tryptophan + FAD + 2 H2O. Involved in the biosynthesis of thienodolin, a plant growth-regulating compound. Catalyzes the chlorination of tryptophan (Trp) at C6 position to yield 6-chloro-tryptophan. It is also able to use bromide ions to generate monobrominated Trp. In vitro, accepts a wide range of amides and peptides carrying either L- or D-Trp at the N-terminus. This chain is Tryptophan 6-halogenase ThaL, found in Streptomyces albogriseolus.